The sequence spans 368 residues: Phospho-N-acetylmuramoyl-pentapeptide-transferase (368 aa).

The next 9 membrane-spanning stretches (helical) occupy residues 30 to 50 (AAAITALLITLFVGPGFIKYL), 72 to 92 (LPTMGGLLIIFSIEISVLLWS), 95 to 115 (IDPHVWLIMLAILWMGIIGFI), 139 to 159 (VTLGLVVGCYTWYDPSFSVLL), 169 to 189 (YLTIDYGYFYIPIVIFIITAV), 208 to 228 (AIVVMGLGGFSYLAGNAVYAV), 238 to 258 (GGEIAVVSMAIVMACVGFLWF), 264 to 286 (EIIMGDTGSLALGSAIAVIALLI), and 345 to 365 (KIVIRFWILTILFFLASLMTL).

It belongs to the glycosyltransferase 4 family. MraY subfamily. Mg(2+) is required as a cofactor.

The protein resides in the cell inner membrane. The catalysed reaction is UDP-N-acetyl-alpha-D-muramoyl-L-alanyl-gamma-D-glutamyl-meso-2,6-diaminopimeloyl-D-alanyl-D-alanine + di-trans,octa-cis-undecaprenyl phosphate = di-trans,octa-cis-undecaprenyl diphospho-N-acetyl-alpha-D-muramoyl-L-alanyl-D-glutamyl-meso-2,6-diaminopimeloyl-D-alanyl-D-alanine + UMP. Its pathway is cell wall biogenesis; peptidoglycan biosynthesis. Its function is as follows. Catalyzes the initial step of the lipid cycle reactions in the biosynthesis of the cell wall peptidoglycan: transfers peptidoglycan precursor phospho-MurNAc-pentapeptide from UDP-MurNAc-pentapeptide onto the lipid carrier undecaprenyl phosphate, yielding undecaprenyl-pyrophosphoryl-MurNAc-pentapeptide, known as lipid I. The sequence is that of Phospho-N-acetylmuramoyl-pentapeptide-transferase from Pelodictyon phaeoclathratiforme (strain DSM 5477 / BU-1).